The chain runs to 132 residues: Small ribosomal subunit protein eS12 (132 aa).

The residue at position 2 (Ala2) is an N-acetylalanine. Lys129 is modified (N6-succinyllysine).

Belongs to the eukaryotic ribosomal protein eS12 family. As to quaternary structure, part of the small subunit (SSU) processome, composed of more than 70 proteins and the RNA chaperone small nucleolar RNA (snoRNA) U3. Subunit of the 40S ribosomal complex.

The protein resides in the nucleus. It localises to the nucleolus. Its function is as follows. Part of the small subunit (SSU) processome, first precursor of the small eukaryotic ribosomal subunit. During the assembly of the SSU processome in the nucleolus, many ribosome biogenesis factors, an RNA chaperone and ribosomal proteins associate with the nascent pre-rRNA and work in concert to generate RNA folding, modifications, rearrangements and cleavage as well as targeted degradation of pre-ribosomal RNA by the RNA exosome. Subunit of the 40S ribosomal complex. The chain is Small ribosomal subunit protein eS12 (Rps12) from Mus musculus (Mouse).